The chain runs to 260 residues: UPF0328 protein ECU07_1870/ECU10_0030 (260 aa).

Belongs to the UPF0328 family.

The sequence is that of UPF0328 protein ECU07_1870/ECU10_0030 from Encephalitozoon cuniculi (strain GB-M1) (Microsporidian parasite).